We begin with the raw amino-acid sequence, 128 residues long: uncharacterized protein (128 aa).

A run of 3 helical transmembrane segments spans residues 19–41 (MAIV…YVGS), 54–71 (LTFL…SIMQ), and 75–97 (PLIA…VDNL).

The protein resides in the cell membrane. This is an uncharacterized protein from Pasteurella multocida (strain Pm70).